A 121-amino-acid chain; its full sequence is Ribonuclease P protein component (121 aa).

Belongs to the RnpA family. In terms of assembly, consists of a catalytic RNA component (M1 or rnpB) and a protein subunit.

The catalysed reaction is Endonucleolytic cleavage of RNA, removing 5'-extranucleotides from tRNA precursor.. RNaseP catalyzes the removal of the 5'-leader sequence from pre-tRNA to produce the mature 5'-terminus. It can also cleave other RNA substrates such as 4.5S RNA. The protein component plays an auxiliary but essential role in vivo by binding to the 5'-leader sequence and broadening the substrate specificity of the ribozyme. In Geobacillus kaustophilus (strain HTA426), this protein is Ribonuclease P protein component.